The primary structure comprises 62 residues: uncharacterized protein (62 aa).

Residues 1–26 are disordered; sequence MGELAASANHGHSPCYPERKGTPGDL. The segment covering 17-26 has biased composition (basic and acidic residues); the sequence is PERKGTPGDL.

This is an uncharacterized protein from Homo sapiens (Human).